Reading from the N-terminus, the 356-residue chain is Probable G-protein coupled receptor 32 (356 aa).

The Extracellular segment spans residues 1 to 44 (MNGVSEGTRGCSDRQPGVLTRDRSCSRKMNSSGCLSEEVGSLRP). An N-linked (GlcNAc...) asparagine glycan is attached at Asn-30. Residues 45–67 (LTVVILSASIVVGVLGNGLVLWM) traverse the membrane as a helical segment. Topologically, residues 68 to 78 (TVFRMARTVST) are cytoplasmic. The chain crosses the membrane as a helical span at residues 79 to 100 (VCFFHLALADFMLSLSLPIAMY). The Extracellular portion of the chain corresponds to 101 to 116 (YIVSRQWLLGEWACKL). Cys-114 and Cys-191 form a disulfide bridge. The chain crosses the membrane as a helical span at residues 117–137 (YITFVFLSYFASNCLLVFISV). At 138–156 (DRCISVLYPVWALNHRTVQ) the chain is on the cytoplasmic side. A helical membrane pass occupies residues 157–178 (RASWLAFGVWLLAAALCSAHLK). The Extracellular segment spans residues 179-220 (FRTTRKWNGCTHCYLAFNSDNETAQIWIEGVVEGHIIGTIGH). N-linked (GlcNAc...) asparagine glycosylation is present at Asn-199. The helical transmembrane segment at 221 to 241 (FLLGFLGPLAIIGTCAHLIRA) threads the bilayer. Topologically, residues 242-257 (KLLREGWVHANRPKRL) are cytoplasmic. Residues 258–280 (LLVLVSAFFIFWSPFNVVLLVHL) form a helical membrane-spanning segment. Topologically, residues 281-300 (WRRVMLKEIYHPRMLLILQA) are extracellular. The chain crosses the membrane as a helical span at residues 301–320 (SFALGCVNSSLNPFLYVFVG). Residues 321–356 (RDFQEKFFQSLTSALARAFGEEEFLSSCPRGNAPRE) lie on the Cytoplasmic side of the membrane.

This sequence belongs to the G-protein coupled receptor 1 family. Expressed in resting primary human macrophages.

It localises to the cell membrane. Its function is as follows. G-protein coupled receptor that binds to several ligands including resolvin D1 (RvD1) with high affinity, leading to rapid and transient activation of numerous intracellular signaling pathways. In macrophages, enhances the RvD1-stimulated phagocytic and clearance functions. Macrophages migrate less toward different chemoattractant stimuli but phagocytose more microbial particles. Prevents the increase in Ca(2+) and activation of ERK1/2 used by histamine and its H1 receptor subtype to induce goblet cell secretion by activating PKC and GRK2 to counter-regulate the histamine receptor. This chain is Probable G-protein coupled receptor 32 (GPR32), found in Homo sapiens (Human).